The sequence spans 1346 residues: Toll-like receptor Tollo (1346 aa).

An N-terminal signal peptide occupies residues 1–21 (MLATTHMLYVLIATCVIPIFG). The Extracellular portion of the chain corresponds to 22–1021 (AALSKTVLYQ…NQPPKLDYIP (1000 aa)). Residues asparagine 63, asparagine 112, and asparagine 126 are each glycosylated (N-linked (GlcNAc...) asparagine). LRR repeat units lie at residues 97-120 (LVEL…SFRG), 124-146 (LRNL…MASN), 151-174 (FRQL…MVCP), 176-198 (KSLQ…YFSA), 209-232 (GSTL…MLSA), 234-256 (GRLT…AFEG), 257-280 (LLSL…LFAE), 282-304 (KQLQ…IFGE), 306-330 (AELL…TFVG), 331-354 (LKRL…IFRP), 355-378 (LASL…IFAD), 380-402 (TNLH…TLQG), 404-426 (KNLL…SLVN), 427-450 (CSQL…LAHV), 452-473 (LLKT…SITQ), 474-497 (LESL…VFDR), 498-521 (MSSL…SLQR), 523-544 (SQLQ…LFTE), 546-568 (PNLV…HIPI), 570-591 (LQWL…EIES), 593-614 (LSLS…SSIP), 615-637 (NSVE…TFFK), and 638-661 (KPNL…ALRL). Asparagine 182 is a glycosylation site (N-linked (GlcNAc...) asparagine). The N-linked (GlcNAc...) asparagine glycan is linked to asparagine 291. Residue asparagine 426 is glycosylated (N-linked (GlcNAc...) asparagine). The N-linked (GlcNAc...) asparagine glycan is linked to asparagine 468. Asparagine 505 is a glycosylation site (N-linked (GlcNAc...) asparagine). N-linked (GlcNAc...) asparagine glycosylation occurs at asparagine 552. N-linked (GlcNAc...) asparagine glycosylation is present at asparagine 640. 4 disulfides stabilise this stretch: cysteine 682–cysteine 710, cysteine 684–cysteine 733, cysteine 757–cysteine 763, and cysteine 761–cysteine 776. 6 LRR repeats span residues 790-813 (PMDS…AFIG), 814-837 (RKRL…TFYG), 838-861 (LLEL…EFQG), 863-885 (DNLQ…TFTH), 887-909 (YHLK…NFLP), and 912-938 (LNEL…YINR). Residues asparagine 823 and asparagine 832 are each glycosylated (N-linked (GlcNAc...) asparagine). The cysteines at positions 924 and 950 are disulfide-linked. 2 N-linked (GlcNAc...) asparagine glycosylation sites follow: asparagine 956 and asparagine 1000. The chain crosses the membrane as a helical span at residues 1022–1042 (ILVAILTAFIFVMICISLVFI). Residues 1043–1346 (FRQEMRVWCH…PTPASRNLHM (304 aa)) lie on the Cytoplasmic side of the membrane. The TIR domain maps to 1074–1209 (KLFDAFVSYS…LFWQKLRFAL (136 aa)). The interval 1235–1346 (HHHHHVHQQA…PTPASRNLHM (112 aa)) is disordered. The segment covering 1267–1300 (PGSFRRQPSLHQQQQQQQQIRGNNNTTQQQQQQQ) has biased composition (low complexity).

Belongs to the Toll-like receptor family. In terms of assembly, may interact (via the extracellular domain) with 18w (via the extracellular domain).

The protein resides in the cell membrane. Its subcellular location is the apical cell membrane. Toll-related receptor. Probably specific to larval innate immunity. Involved in the tracheal immune response of larvae to Gram-negative and perhaps Gram-positive bacteria; upon infection it negatively regulates the immune deficiency (Imd) signaling cascade specifically in the respiratory epithelium to prevent the overexpression of antimicrobial peptides (AMP). Involved in the NF-kappa-B-dependent apoptosis of unfit cells during cell competition. Involved in neuron-specific glycosylation. Positively controls the neuromuscular junction (NMJ) growth in presynaptic motorneurons, probably via the JNK pathway. During development of the peripheral nervous system, may function in the NF-kappa-B (rel) regulatory cascade to repress expression of the neuron-specific genes sc and ase in non-neuronal cells. Promotes heterophilic cell adhesion with 18w in vitro. May have a minor role in leg development. May be involved in determining the proximal cell fate in the wing, possibly by negatively regulating the Dpp signaling pathway. May also be involved in the Dpp signaling pathway in the eye. Possibly functions with 18w and Toll-6 during convergent extension, to help direct proper planar cell polarity, cell intercalation and axis elongation. The sequence is that of Toll-like receptor Tollo from Drosophila melanogaster (Fruit fly).